A 148-amino-acid chain; its full sequence is Calcium-permeable cation-selective channel WeiTsing (148 aa).

Residues 1–25 (METVSAVNQTLPISGGEPVKFTTYS) lie on the Cytoplasmic side of the membrane. The chain crosses the membrane as a helical span at residues 26–46 (AAVHKVLVMINAGILGLLQLV). Residues 47-51 (SQQSS) lie on the Lumenal side of the membrane. Residues 52-72 (VLETHKAAFLCFCVFILFYAV) traverse the membrane as a helical segment. Residues 73-90 (LRVREAMDVRLQPGLVPR) are Cytoplasmic-facing. Residues 91 to 110 (LIGHGSHLFGGLAALVLVSV) form a helical membrane-spanning segment. Residues 111-116 (VSTAFS) lie on the Lumenal side of the membrane. Residues 117–133 (IVLFLLWFIWLSAVVYL) form a helical membrane-spanning segment. Residues 134–148 (ETNKPSACPPQLPPV) lie on the Cytoplasmic side of the membrane.

As to quaternary structure, forms pentamers with a central pore to produce an ion channel.

Its subcellular location is the endoplasmic reticulum membrane. The catalysed reaction is Ca(2+)(in) = Ca(2+)(out). The enzyme catalyses Na(+)(in) = Na(+)(out). Calcium-permeable cation-selective channel conferring a broad-spectrum clubroot resistance by supporting cytosolic Ca(2+) increase in root pericycle cells. Triggers immunity toward fungal pathogens such as Plasmodiophora brassicae (Pb) and induces defenses. Also permeable to sodium ion Na(+) and possibly other cations. The chain is Calcium-permeable cation-selective channel WeiTsing from Arabidopsis thaliana (Mouse-ear cress).